The following is a 178-amino-acid chain: Cytochrome b6-f complex iron-sulfur subunit 2 (178 aa).

Residues 17–36 (LLNFFTGAIVAATASAAIYP) form a helical membrane-spanning segment. The Rieske domain occupies 61–161 (GHPIPASQIL…VQVKDDYIWI (101 aa)). [2Fe-2S] cluster contacts are provided by Cys-107, His-109, Cys-125, and His-128. Cys-112 and Cys-127 are oxidised to a cystine.

Belongs to the Rieske iron-sulfur protein family. As to quaternary structure, the 4 large subunits of the cytochrome b6-f complex are cytochrome b6, subunit IV (17 kDa polypeptide, PetD), cytochrome f and the Rieske protein, while the 4 small subunits are PetG, PetL, PetM and PetN. The complex functions as a dimer. [2Fe-2S] cluster is required as a cofactor.

Its subcellular location is the cellular thylakoid membrane. The catalysed reaction is 2 oxidized [plastocyanin] + a plastoquinol + 2 H(+)(in) = 2 reduced [plastocyanin] + a plastoquinone + 4 H(+)(out). Functionally, component of the cytochrome b6-f complex, which mediates electron transfer between photosystem II (PSII) and photosystem I (PSI), cyclic electron flow around PSI, and state transitions. This chain is Cytochrome b6-f complex iron-sulfur subunit 2, found in Trichormus variabilis (strain ATCC 29413 / PCC 7937) (Anabaena variabilis).